The primary structure comprises 669 residues: Thrombospondin-type laminin G domain and EAR repeat-containing protein (669 aa).

The first 19 residues, 1–19 (MSALLSLCFVLPLAAPGHG), serve as a signal peptide directing secretion. Positions 58-277 (GLQLSVAAPR…RVTLGPQPPC (220 aa)) constitute a Laminin G-like domain. EAR repeat units follow at residues 313 to 358 (DYVE…KWTE), 360 to 408 (KFVS…KWSH), 412 to 460 (KFTP…KWNP), 464 to 506 (LFEA…VHSH), 514 to 570 (SFQL…ELNV), 574 to 622 (AFVK…RWQG), and 625 to 668 (GFVA…RLRT). N-linked (GlcNAc...) asparagine glycosylation is present at Asn320. N-linked (GlcNAc...) asparagine glycosylation is found at Asn468, Asn497, Asn556, and Asn569.

The protein localises to the secreted. The protein resides in the cell surface. It localises to the cell projection. Its subcellular location is the stereocilium. Functionally, plays a critical role in tooth and hair follicle morphogenesis through regulation of the Notch signaling pathway. May play a role in development or function of the auditory system. This is Thrombospondin-type laminin G domain and EAR repeat-containing protein (TSPEAR) from Homo sapiens (Human).